We begin with the raw amino-acid sequence, 352 residues long: tRNA uridine(34) hydroxylase (352 aa).

The 95-residue stretch at 144 to 238 (SDPDVILIDT…YLEEVPASDS (95 aa)) folds into the Rhodanese domain. The Cysteine persulfide intermediate role is filled by Cys198.

It belongs to the TrhO family.

It catalyses the reaction uridine(34) in tRNA + AH2 + O2 = 5-hydroxyuridine(34) in tRNA + A + H2O. Catalyzes oxygen-dependent 5-hydroxyuridine (ho5U) modification at position 34 in tRNAs. The sequence is that of tRNA uridine(34) hydroxylase from Psychrobacter cryohalolentis (strain ATCC BAA-1226 / DSM 17306 / VKM B-2378 / K5).